A 321-amino-acid polypeptide reads, in one-letter code: Agamous-like MADS-box protein AGL80 (321 aa).

In terms of domain architecture, MADS-box spans 1–61; it reads MTRKKVKLAY…DTNPEVWPSN (61 aa). Residues 89 to 114 are a coiled coil; sequence FLKQRIAKATETLRRQRKDSRELEMT.

Interacts with AGL61 and AGL62. Forms a heterodimer with AGL61. Interacts with MEE14/CBP1. In terms of tissue distribution, expressed in the central cell of the female gametophyte and in early endosperm. Also detected in ovaries, young siliques, roots, leaves, stems, young flowers and anthers.

It is found in the nucleus. Its function is as follows. Probable transcription factor. Controls central cell differentiation during female gametophyte development. Required for the expression of DEMETER and DD46, but not for the expression of FIS2. Probable transcription factor that may function in the maintenance of the proper function of the central cell in pollen tube attraction. This chain is Agamous-like MADS-box protein AGL80 (AGL80), found in Arabidopsis thaliana (Mouse-ear cress).